The chain runs to 124 residues: MYATPIGYADTRFETAADAPRQGVETPYAANVQVYESFRGGLVGLEPDDRVVVVWWADDADRDVLAVRDGDRGVFTTRSPARPNPVCITPCELLAVDAADGTLAIRGVDMAHGSPVLDLKPALD.

One can recognise a TsaA-like domain in the interval 3–124; the sequence is ATPIGYADTR…PVLDLKPALD (122 aa). Residues 20–22, 58–59, Arg78, and 111–114 contribute to the S-adenosyl-L-methionine site; these read PRQ, DD, and AHGS.

This sequence belongs to the tRNA methyltransferase O family.

In Halobacterium salinarum (strain ATCC 700922 / JCM 11081 / NRC-1) (Halobacterium halobium), this protein is Probable S-adenosyl-L-methionine-binding protein VNG_1115H.